The following is a 149-amino-acid chain: Transcriptional repressor NrdR (149 aa).

A zinc finger lies at 3–34 (CPFCQSDDTKVLDTRLIDDGSQVRRRRECVSC). The ATP-cone domain occupies 49-139 (PHLIKSDDSR…VYRQFQDIEA (91 aa)).

Belongs to the NrdR family. Requires Zn(2+) as cofactor.

In terms of biological role, negatively regulates transcription of bacterial ribonucleotide reductase nrd genes and operons by binding to NrdR-boxes. This is Transcriptional repressor NrdR from Ruthia magnifica subsp. Calyptogena magnifica.